The sequence spans 692 residues: Serine/threonine-protein kinase Nek8 (692 aa).

A Protein kinase domain is found at 4-258 (YERIRVVGRG…LSHIMAQPLC (255 aa)). Residues 10-18 (VGRGAFGIV) and K33 contribute to the ATP site. D128 serves as the catalytic Proton acceptor. A Phosphothreonine; by autocatalysis modification is found at T162. A disordered region spans residues 277 to 301 (AEKSVAPSNTGSRTTSVRCRGIPRG). The segment covering 282 to 293 (APSNTGSRTTSV) has biased composition (polar residues). RCC1 repeat units follow at residues 312–350 (SSVY…VTRS), 410–461 (GIIM…LSTE), 462–513 (RELF…LTVP), 580–631 (GDCY…IGAE), and 632–684 (SEVY…AVRS).

The protein belongs to the protein kinase superfamily. NEK Ser/Thr protein kinase family. NIMA subfamily. As to quaternary structure, interacts with PKD2; may regulate PKD2 targeting to the cilium. Interacts with ANKS6. Component of a complex containing at least ANKS6, INVS, NEK8 and NPHP3. ANKS6 may organize complex assembly by linking INVS and NPHP3 to NEK8 and INVS may target the complex to the proximal ciliary axoneme. Interacts with ANKS3. Requires Mg(2+) as cofactor. As to expression, highest expression in thyroid, adrenal gland and skin. Low levels in spleen, colon and uterus. Overexpressed in breast tumors, with highest expression in infiltrating ductal carcinomas and moderate levels in mucinous adenocarcinoma.

The protein localises to the cytoplasm. It localises to the cytoskeleton. The protein resides in the cell projection. It is found in the cilium. Its subcellular location is the microtubule organizing center. The protein localises to the centrosome. It localises to the cilium axoneme. The catalysed reaction is L-seryl-[protein] + ATP = O-phospho-L-seryl-[protein] + ADP + H(+). It catalyses the reaction L-threonyl-[protein] + ATP = O-phospho-L-threonyl-[protein] + ADP + H(+). In terms of biological role, required for renal tubular integrity. May regulate local cytoskeletal structure in kidney tubule epithelial cells. May regulate ciliary biogenesis through targeting of proteins to the cilia. Plays a role in organogenesis, and is involved in the regulation of the Hippo signaling pathway. The polypeptide is Serine/threonine-protein kinase Nek8 (NEK8) (Homo sapiens (Human)).